A 1052-amino-acid chain; its full sequence is Calmin (1052 aa).

Residues 1–288 form an actin-binding region; that stretch reads MAAQEWDWFQ…IVTYVAQFLE (288 aa). The region spanning 32–139 is the Calponin-homology (CH) 1 domain; it reads NVQKRTFTRW…LIWNIILFFQ (108 aa). A compositionally biased stretch (low complexity) spans 148 to 168; it reads SRSSPSSSLSPGSGGTDSDSS. The interval 148–178 is disordered; the sequence is SRSSPSSSLSPGSGGTDSDSSYPPTPTTERS. The region spanning 187–291 is the Calponin-homology (CH) 2 domain; that stretch reads RKAIKTLLSW…YVAQFLERFP (105 aa). Disordered stretches follow at residues 391-420, 455-545, 585-727, and 758-929; these read STGK…SNSL, KATK…TLLA, STSQ…SPPL, and GEDL…DSSI. Composition is skewed to basic and acidic residues over residues 455–465 and 472–495; these read KATKELSKQDG and VSKE…DKVP. A compositionally biased stretch (polar residues) spans 509-529; sequence AQPSQDSSFCNGTVESPSSQG. At S537 the chain carries Phosphoserine. Composition is skewed to basic and acidic residues over residues 594–614, 622–651, and 659–669; these read PSSH…AEKP, PRAE…EDQG, and PADKKPKVYEK. At S679 the chain carries Phosphoserine. T710 bears the Phosphothreonine mark. The segment covering 711-720 has biased composition (basic and acidic residues); it reads LRSHSEEGLD. A Phosphoserine modification is found at S724. The span at 759–773 shows a compositional bias: basic and acidic residues; sequence EDLKSEDTDLEHPED. Over residues 780 to 791 the composition is skewed to acidic residues; the sequence is REEEADEDEEEA. The span at 792-801 shows a compositional bias: low complexity; it reads QSSQSSCSFS. Positions 836 to 849 are enriched in basic and acidic residues; that stretch reads SHEDHQPKETKENG. S856 bears the Phosphoserine mark. Positions 880–889 are enriched in basic residues; the sequence is SKKKEKRKHM. Residue S925 is modified to Phosphoserine. Residues 1027 to 1047 form a helical; Anchor for type IV membrane protein membrane-spanning segment; sequence VIYFILFLWLLVYCLLLFPQL.

As to expression, expressed in testis. Expressed during testis maturation process and in maturing spermatids. In brain, it is expressed in neurons of the hippocampus, cerebral cortex, and thalamus, Purkinje cells, and also in the choroid plexus and ependymal cells. Expressed predominantly in dendrites and cell bodies of the neurons, but not in axons. The level of expression increases during the period of maturation of the mouse brain after birth.

It is found in the membrane. Its subcellular location is the cytoplasm. This chain is Calmin (Clmn), found in Mus musculus (Mouse).